The primary structure comprises 319 residues: ATP-dependent 6-phosphofructokinase (319 aa).

Glycine 11 serves as a coordination point for ATP. 21-25 (RAVVR) serves as a coordination point for ADP. ATP-binding positions include 72–73 (RC) and 102–105 (GDGS). A Mg(2+)-binding site is contributed by aspartate 103. 125-127 (TID) is a substrate binding site. Aspartate 127 serves as the catalytic Proton acceptor. Arginine 154 lines the ADP pocket. Substrate-binding positions include arginine 162 and 169 to 171 (MGR). Residues 185–187 (GAE), arginine 211, and 213–215 (KKH) contribute to the ADP site. Substrate contacts are provided by residues glutamate 222, arginine 243, and 249–252 (HVQR).

Belongs to the phosphofructokinase type A (PFKA) family. ATP-dependent PFK group I subfamily. Prokaryotic clade 'B1' sub-subfamily. In terms of assembly, homotetramer. Requires Mg(2+) as cofactor.

It localises to the cytoplasm. The catalysed reaction is beta-D-fructose 6-phosphate + ATP = beta-D-fructose 1,6-bisphosphate + ADP + H(+). The protein operates within carbohydrate degradation; glycolysis; D-glyceraldehyde 3-phosphate and glycerone phosphate from D-glucose: step 3/4. With respect to regulation, allosterically activated by ADP and other diphosphonucleosides, and allosterically inhibited by phosphoenolpyruvate. Its function is as follows. Catalyzes the phosphorylation of D-fructose 6-phosphate to fructose 1,6-bisphosphate by ATP, the first committing step of glycolysis. This chain is ATP-dependent 6-phosphofructokinase, found in Bacillus cereus (strain ATCC 14579 / DSM 31 / CCUG 7414 / JCM 2152 / NBRC 15305 / NCIMB 9373 / NCTC 2599 / NRRL B-3711).